A 183-amino-acid chain; its full sequence is ATP synthase subunit b, chloroplastic (183 aa).

Residues 28–48 (DIFEANVINILLLLFGLIYVL) form a helical membrane-spanning segment.

This sequence belongs to the ATPase B chain family. F-type ATPases have 2 components, F(1) - the catalytic core - and F(0) - the membrane proton channel. F(1) has five subunits: alpha(3), beta(3), gamma(1), delta(1), epsilon(1). F(0) has four main subunits: a(1), b(1), b'(1) and c(10-14). The alpha and beta chains form an alternating ring which encloses part of the gamma chain. F(1) is attached to F(0) by a central stalk formed by the gamma and epsilon chains, while a peripheral stalk is formed by the delta, b and b' chains.

It localises to the plastid. The protein localises to the chloroplast thylakoid membrane. In terms of biological role, f(1)F(0) ATP synthase produces ATP from ADP in the presence of a proton or sodium gradient. F-type ATPases consist of two structural domains, F(1) containing the extramembraneous catalytic core and F(0) containing the membrane proton channel, linked together by a central stalk and a peripheral stalk. During catalysis, ATP synthesis in the catalytic domain of F(1) is coupled via a rotary mechanism of the central stalk subunits to proton translocation. Component of the F(0) channel, it forms part of the peripheral stalk, linking F(1) to F(0). The polypeptide is ATP synthase subunit b, chloroplastic (Porphyra purpurea (Red seaweed)).